Consider the following 885-residue polypeptide: DNA-directed RNA polymerase subunit Rpo1N (885 aa).

Residues Cys-60, Cys-63, Cys-70, His-73, Cys-100, Cys-103, Cys-150, and Cys-153 each coordinate Zn(2+). Residues Asp-464, Asp-466, and Asp-468 each coordinate Mg(2+).

The protein belongs to the RNA polymerase beta' chain family. In terms of assembly, part of the RNA polymerase complex. Mg(2+) is required as a cofactor. The cofactor is Zn(2+).

Its subcellular location is the cytoplasm. The enzyme catalyses RNA(n) + a ribonucleoside 5'-triphosphate = RNA(n+1) + diphosphate. DNA-dependent RNA polymerase (RNAP) catalyzes the transcription of DNA into RNA using the four ribonucleoside triphosphates as substrates. Forms the clamp head domain. The polypeptide is DNA-directed RNA polymerase subunit Rpo1N (Thermoplasma acidophilum (strain ATCC 25905 / DSM 1728 / JCM 9062 / NBRC 15155 / AMRC-C165)).